The primary structure comprises 882 residues: Translation initiation factor IF-2 (882 aa).

The disordered stretch occupies residues 38 to 294 (IEDSQASWVK…KSKHKRKKEN (257 aa)). Composition is skewed to basic and acidic residues over residues 66–76 (TRDEAVKKHSG), 109–128 (GRREFSENREQSRKGEERHS), and 207–219 (PDNKGSRPSDAKR). Residues 282–292 (PGRKSKHKRKK) are compositionally biased toward basic residues. Residues 383–556 (ARPPVVTIMG…EMNEIRANPD (174 aa)) form the tr-type G domain. The interval 392-399 (GHVDHGKT) is G1. GTP is bound at residue 392-399 (GHVDHGKT). Residues 417–421 (GITQH) are G2. The interval 438–441 (DTPG) is G3. Residues 438 to 442 (DTPGH) and 492 to 495 (NKID) each bind GTP. Residues 492–495 (NKID) form a G4 region. The segment at 528–530 (SAK) is G5.

It belongs to the TRAFAC class translation factor GTPase superfamily. Classic translation factor GTPase family. IF-2 subfamily.

The protein resides in the cytoplasm. One of the essential components for the initiation of protein synthesis. Protects formylmethionyl-tRNA from spontaneous hydrolysis and promotes its binding to the 30S ribosomal subunits. Also involved in the hydrolysis of GTP during the formation of the 70S ribosomal complex. In Syntrophomonas wolfei subsp. wolfei (strain DSM 2245B / Goettingen), this protein is Translation initiation factor IF-2.